Reading from the N-terminus, the 573-residue chain is 60 kDa heat shock protein, mitochondrial (573 aa).

Residues 1–26 (MLRLPTVFRQMRPVSRVLAPHLTRAY) constitute a mitochondrion transit peptide. Lys-31 bears the N6-succinyllysine mark. Ser-67 and Ser-70 each carry phosphoserine. Lys-75 is an ATP binding site. Lys-75 is subject to N6-acetyllysine. An N6-acetyllysine; alternate modification is found at Lys-82. Lys-82 carries the post-translational modification N6-succinyllysine; alternate. Position 87 is an N6-acetyllysine (Lys-87). Tyr-90 carries the phosphotyrosine modification. Residue Lys-91 is modified to N6-acetyllysine. ATP is bound at residue 111 to 115 (DGTTT). Lys-125 is modified (N6-acetyllysine; alternate). Residue Lys-125 is modified to N6-succinyllysine; alternate. Lys-130 is subject to N6-acetyllysine. Lys-133 is modified (N6-acetyllysine; alternate). Residue Lys-133 is modified to N6-succinyllysine; alternate. The residue at position 133 (Lys-133) is an N6-malonyllysine; alternate. Lys-156 carries the post-translational modification N6-acetyllysine. N6-acetyllysine; alternate occurs at positions 191, 202, 205, 218, and 236. Lys-191, Lys-202, Lys-205, Lys-218, and Lys-236 each carry N6-succinyllysine; alternate. N6-acetyllysine is present on Lys-249. Position 250 is an N6-acetyllysine; alternate (Lys-250). Position 250 is an N6-succinyllysine; alternate (Lys-250). N6-acetyllysine occurs at positions 269 and 292. N6-succinyllysine is present on Lys-301. Lys-314 is subject to N6-acetyllysine. Position 352 is an N6-acetyllysine; alternate (Lys-352). The residue at position 352 (Lys-352) is an N6-succinyllysine; alternate. Residue Lys-389 is modified to N6-acetyllysine. N6-acetyllysine; alternate is present on Lys-396. Lys-396 carries the N6-succinyllysine; alternate modification. A Phosphoserine modification is found at Ser-410. Gly-440 contacts ATP. An N6-acetyllysine modification is found at Lys-469. Residue Lys-481 is modified to N6-acetyllysine; alternate. An N6-succinyllysine; alternate modification is found at Lys-481. A Phosphoserine modification is found at Ser-488. Asp-520 contacts ATP. Residue Lys-551 forms a Glycyl lysine isopeptide (Lys-Gly) (interchain with G-Cter in SUMO2) linkage.

It belongs to the chaperonin (HSP60) family. As to quaternary structure, homoheptamer arranged in a ring structure. The functional units of these chaperonins consist of heptameric rings of the large subunit Hsp60, which function as a back-to-back double ring. Interacts with 2 heptameric Hsp10 rings to form the symmetrical football complex. Interacts with HRAS. Interacts with ATAD3A. Interacts with ETFBKMT and EEF1AKMT3. Interacts with MFHAS1.

The protein resides in the mitochondrion matrix. The catalysed reaction is ATP + H2O + a folded polypeptide = ADP + phosphate + an unfolded polypeptide.. Its function is as follows. Chaperonin implicated in mitochondrial protein import and macromolecular assembly. Together with Hsp10, facilitates the correct folding of imported proteins. May also prevent misfolding and promote the refolding and proper assembly of unfolded polypeptides generated under stress conditions in the mitochondrial matrix. The functional units of these chaperonins consist of heptameric rings of the large subunit Hsp60, which function as a back-to-back double ring. In a cyclic reaction, Hsp60 ring complexes bind one unfolded substrate protein per ring, followed by the binding of ATP and association with 2 heptameric rings of the co-chaperonin Hsp10. This leads to sequestration of the substrate protein in the inner cavity of Hsp60 where, for a certain period of time, it can fold undisturbed by other cell components. Synchronous hydrolysis of ATP in all Hsp60 subunits results in the dissociation of the chaperonin rings and the release of ADP and the folded substrate protein. The sequence is that of 60 kDa heat shock protein, mitochondrial (HSPD1) from Pongo abelii (Sumatran orangutan).